The chain runs to 293 residues: Protein bcp-1 (293 aa).

A compositionally biased stretch (basic and acidic residues) spans 1–12 (MGKKRSREEAQK). The interval 1–35 (MGKKRSREEAQKEVVQNDPTVDKMDEDSDSSDSDE) is disordered. Acidic residues predominate over residues 24-35 (MDEDSDSSDSDE).

It belongs to the BCP1 family.

The protein localises to the cytoplasm. It is found in the nucleus. Functionally, involved in nuclear export, actin cytoskeleton organization and vesicular transport. The sequence is that of Protein bcp-1 (bcp-1) from Neurospora crassa (strain ATCC 24698 / 74-OR23-1A / CBS 708.71 / DSM 1257 / FGSC 987).